A 202-amino-acid chain; its full sequence is Prephenate decarboxylase (202 aa).

Belongs to the prephenate decarboxylase family.

It catalyses the reaction prephenate + H(+) = 3-[(4R)-4-hydroxycyclohexa-1,5-dien-1-yl]-2-oxopropanoate + CO2. Functionally, in vivo, involved in the biosynthesis of 2-carboxy-6-hydroxyoctahydroindole (Choi) present in the nonribosomal glycopeptides aeruginoside 126A and B. AerD is an unusual prephenate decarboxylase that avoids the typical aromatization of the cyclohexadienol ring of prephenate. AerD catalyzes the protonation at C8 followed by decarboxylation to produce the dihydro-4-hydroxyphenylpyruvate regioisomer A258 (H2HPP A258)(3-(4-hydroxycyclohexa- 1,5-dienyl)-2-oxopropanoic acid), which is able to undergo a nonenzymatic isomerization to produce dihydro-4-hydroxyphenylpyruvate regioisomer A295 (H2HPP A295)(3-(4-hydroxycyclohex-2-enylidene)-2-oxopropanoic acid). This chain is Prephenate decarboxylase, found in Planktothrix agardhii (strain NIVA-CYA 126/8).